A 302-amino-acid chain; its full sequence is AP-1 complex-associated regulatory protein (302 aa).

Ser29 is modified (phosphoserine). The interval 78-138 (DSIAEKQKDL…ERQRIVQQYH (61 aa)) is interaction with AP1G1. Residues 80–138 (IAEKQKDLDKKIQKELALQEEKLRLEEEALYAAQREAARAAKQRKLLEQERQRIVQQYH) adopt a coiled-coil conformation. The segment covering 188-206 (CDLMTKTKSTSGNDDSTSL) has biased composition (polar residues). The disordered stretch occupies residues 188 to 258 (CDLMTKTKST…TSASDDSNGL (71 aa)). The sufficient for association with the Arp2/3 complex stretch occupies residues 199-215 (GNDDSTSLDLEWEDEEG). Basic and acidic residues predominate over residues 221 to 233 (PMRERSKTEEDIL). Position 226 is a phosphoserine (Ser226). Thr228 is modified (phosphothreonine). Polar residues predominate over residues 242–255 (KKTGSNPTSASDDS).

Interacts (via coiled-coil domain) with AP1G1 (via GAE domain). Interacts with KIF5B. Associates with the Arp2/3 complex. In terms of processing, palmitoylated.

The protein localises to the golgi apparatus. Its subcellular location is the trans-Golgi network. It is found in the late endosome. It localises to the early endosome. Necessary for adaptor protein complex 1 (AP-1)-dependent transport between the trans-Golgi network and endosomes. Regulates the membrane association of AP1G1/gamma1-adaptin, one of the subunits of the AP-1 adaptor complex. The direct interaction with AP1G1/gamma1-adaptin attenuates the release of the AP-1 complex from membranes. Regulates endosomal membrane traffic via association with AP-1 and KIF5B thus linking kinesin-based plus-end-directed microtubular transport to AP-1-dependent membrane traffic. May act as effector of AP-1 in calcium-induced endo-lysosome secretion. Inhibits Arp2/3 complex function; negatively regulates cell spreading, size and motility via intracellular sequestration of the Arp2/3 complex. The polypeptide is AP-1 complex-associated regulatory protein (AP1AR) (Homo sapiens (Human)).